The primary structure comprises 364 residues: 3-dehydroquinate synthase (364 aa).

Residues 73–78 (DGEQNK), 107–111 (GVIGD), 131–132 (TT), K144, K153, and 171–174 (CLCT) each bind NAD(+). The Zn(2+) site is built by E186, H249, and H266.

Belongs to the sugar phosphate cyclases superfamily. Dehydroquinate synthase family. NAD(+) is required as a cofactor. Co(2+) serves as cofactor. The cofactor is Zn(2+).

It localises to the cytoplasm. The catalysed reaction is 7-phospho-2-dehydro-3-deoxy-D-arabino-heptonate = 3-dehydroquinate + phosphate. The protein operates within metabolic intermediate biosynthesis; chorismate biosynthesis; chorismate from D-erythrose 4-phosphate and phosphoenolpyruvate: step 2/7. Functionally, catalyzes the conversion of 3-deoxy-D-arabino-heptulosonate 7-phosphate (DAHP) to dehydroquinate (DHQ). The protein is 3-dehydroquinate synthase of Blochmanniella floridana.